The sequence spans 554 residues: Arginine--tRNA ligase (554 aa).

The short motif at 129–139 (ANPTGPLHIGH) is the 'HIGH' region element.

The protein belongs to the class-I aminoacyl-tRNA synthetase family. Monomer.

The protein resides in the cytoplasm. It carries out the reaction tRNA(Arg) + L-arginine + ATP = L-arginyl-tRNA(Arg) + AMP + diphosphate. This Citrifermentans bemidjiense (strain ATCC BAA-1014 / DSM 16622 / JCM 12645 / Bem) (Geobacter bemidjiensis) protein is Arginine--tRNA ligase.